The sequence spans 229 residues: NAD(P)H-hydrate epimerase (229 aa).

A YjeF N-terminal domain is found at 10 to 224 (SREVDQIAIE…DIGIPPALLD (215 aa)). 57–61 (NNGGD) is a (6S)-NADPHX binding site. 2 residues coordinate K(+): Asn58 and Asp129. (6S)-NADPHX-binding positions include 133-139 (GTGIRGQ) and Asp167. Ser170 is a K(+) binding site.

It belongs to the NnrE/AIBP family. Requires K(+) as cofactor.

It catalyses the reaction (6R)-NADHX = (6S)-NADHX. The enzyme catalyses (6R)-NADPHX = (6S)-NADPHX. Catalyzes the epimerization of the S- and R-forms of NAD(P)HX, a damaged form of NAD(P)H that is a result of enzymatic or heat-dependent hydration. This is a prerequisite for the S-specific NAD(P)H-hydrate dehydratase to allow the repair of both epimers of NAD(P)HX. The protein is NAD(P)H-hydrate epimerase of Rubinisphaera brasiliensis (strain ATCC 49424 / DSM 5305 / JCM 21570 / IAM 15109 / NBRC 103401 / IFAM 1448) (Planctomyces brasiliensis).